The following is a 133-amino-acid chain: Small ribosomal subunit protein uS11 (133 aa).

The protein belongs to the universal ribosomal protein uS11 family. In terms of assembly, part of the 30S ribosomal subunit. Interacts with proteins S7 and S18. Binds to IF-3.

Functionally, located on the platform of the 30S subunit, it bridges several disparate RNA helices of the 16S rRNA. Forms part of the Shine-Dalgarno cleft in the 70S ribosome. The polypeptide is Small ribosomal subunit protein uS11 (Methylibium petroleiphilum (strain ATCC BAA-1232 / LMG 22953 / PM1)).